Consider the following 1504-residue polypeptide: MSALPLALRSARRAGARSLGLIGGRGSADVIYAPPPPSRGAVAVLATPSALTDRGTERQGYRQAHVQAMPGEAAGAELPLPEAGGPGSRTDHSCDAAIATILKGDQLEPHGLTPGPSPLALTFLSSKPGARPQPEGASWDAGPSGAASAWVDPAEGSPSLVVLPEGLPLRPVPAEGPLPTTLEPRIVMGEETCQVIASPRAAWPVLRDREGGHPALHPPPELCSQGDPPVPSPPPDLESYFTPPSTPTKSTHALLPDHGPHRDAWDLEAELLDELLDSTPASPSGSYITADGDSWASSPSCSLSLLDPAEGLDFPSDWGLSPSGSVADDLEPHPAAPPEPPSSESSLSADSSSSWSQEGHFFDPNFLANDPMIPAALLPFRGSLIFQVEAVEVTPLPQEEEEDEEDVAATAAAAAPAAATPDGDLAGEGEDDSTSASFLQSLSDLSIIEGMDEAFAFRDDTSAASSDSDSASYAGADDDRLYSGEPHAQPSAQNTEQAYRSRATFPGIESTPQTSEQEICLTNSQESVAEIAEEILTLGLESEAMRTPPDQQAAPGPQVEETPTVTPWVGNKVDLVVEQVSKALPEPCQEGISTTLGCKPLTAEAIPDLQEGASPSLCPVLPEKKEEGQGLPSTLEYVAVALEGPWKAEGGVTIPQDPLMTLPPLLQSTVPTSGPESVAVVALEPQQNEGCVTVLPDVPVVLPPSPQSVDPSSGPEAMAVATYEFQRAKEGTPGLQDSPVAASPALQGPDPTSEPEPEVVVTSRSQQDEGIVTVPQESPTASSLTLQSSHPTSDQEREVAATLGPQQAEEGVTIPQVAPVASPSLLQGLESTSDLESVVVGTPESQQDEGIATATQDTPVMAPPPLRGTDSTSDPELIAPDTSQALQREAGHTPGTKPSVSEAHQELGVASGPRPVPKEGDAEPPPHSAPPASNQAQQNGSEPGYKSDSFGAPEESDSTLSTKTSEPTSCMGEKVAANMSAPKQGACLEAHDGVKTHSPQREALRSKNKRGRGTKSPGQGNGPKSATSQGAVETCRAHSAARSEVSQPQLRSNEDTSGPRLPVAVSVQARLGSCPGSPARATCTLSRVYAEETSRCAPPFQHLEPMLGLGSAEQPKVTPGILNLSPDNSAGDLLTTSQNRFLDPDPAPSTLDRASQSSPGPPDPCLCPPPQKASEEEEKPPASRGPMPRAGAQGAAAITTSGSTKPPGARQRVSLSPHSTLNPKVAPTDTKDLACIISSPCQVPPPSGTQNPSGPREFPALEQKDEDSLEEDAQRAPGSGQRWESHGESSSELDEYLAPPPDAQRTPGSGQRSESHGESSSELGEQDLSPQKSQCPAQGPAGSNEETIAKAKQSRSEKKARKAMSKLGLRQIQGVTRITIQKSKNILFVIAKPDVFKSPASDTYVVFGEAKIEDLSQQVHKAAAEKFKVPSEPSALVPELSPGPRVRPECEEQEEEDEEVEEAGLEPRDIELVMAQANVTRAKAVRALKDNHSDIVNAIMELTM.

Disordered stretches follow at residues 127 to 150 (KPGARPQPEGASWDAGPSGAASAW), 208 to 261 (DREG…HGPH), 315 to 356 (PSDW…SSWS), 396 to 436 (LPQE…STSA), 460 to 525 (DTSA…TNSQ), 539 to 565 (GLESEAMRTPPDQQAAPGPQVEETPTV), 701 to 812 (VLPP…EEGV), 834 to 1064 (DLES…LPVA), 1099 to 1366 (PFQH…AMSK), and 1430 to 1467 (PSEPSALVPELSPGPRVRPECEEQEEEDEEVEEAGLEP). Positions 342 to 354 (SSESSLSADSSSS) are enriched in low complexity. Residues 398 to 407 (QEEEEDEEDV) are compositionally biased toward acidic residues. Composition is skewed to low complexity over residues 408-422 (AATAAAAAPAAATPD) and 462-475 (SAASSDSDSASYAG). The segment covering 510–525 (STPQTSEQEICLTNSQ) has biased composition (polar residues). Residues 775-792 (PQESPTASSLTLQSSHPT) are compositionally biased toward polar residues. Residues 930-939 (PPASNQAQQN) are compositionally biased toward low complexity. Polar residues predominate over residues 958–968 (STLSTKTSEPT). The segment covering 989-1005 (EAHDGVKTHSPQREALR) has biased composition (basic and acidic residues). S998 carries the phosphoserine modification. Positions 1016 to 1031 (SPGQGNGPKSATSQGA) are enriched in polar residues. Residues 1159–1171 (PGPPDPCLCPPPQ) show a composition bias toward pro residues. The span at 1213-1222 (VSLSPHSTLN) shows a compositional bias: polar residues. Phosphoserine is present on S1268. The 66-residue stretch at 1354 to 1419 (SRSEKKARKA…AKIEDLSQQV (66 aa)) folds into the NAC-A/B domain. Residues 1451–1464 (EEQEEEDEEVEEAG) show a composition bias toward acidic residues.

This sequence belongs to the NAC-alpha family.

The protein localises to the cytoplasm. The protein resides in the nucleus. May prevent inappropriate targeting of non-secretory polypeptides to the endoplasmic reticulum (ER). May bind to nascent polypeptide chains as they emerge from the ribosome and block their interaction with the signal recognition particle (SRP), which normally targets nascent secretory peptides to the ER. May also reduce the inherent affinity of ribosomes for protein translocation sites in the ER membrane (M sites). This Mus musculus (Mouse) protein is NAC-alpha domain-containing protein 1 (Nacad).